We begin with the raw amino-acid sequence, 265 residues long: Undecaprenyl-diphosphatase 1 (265 aa).

The next 7 helical transmembrane spans lie at 4-24, 42-62, 84-104, 108-128, 184-204, 217-237, and 245-265; these read IITA…PISS, AKTF…ILYH, FHVF…HDVI, LFQP…MIFA, SEFS…LDLL, MFAV…VTFL, and LKPF…FVLL.

Belongs to the UppP family.

The protein localises to the cell membrane. The catalysed reaction is di-trans,octa-cis-undecaprenyl diphosphate + H2O = di-trans,octa-cis-undecaprenyl phosphate + phosphate + H(+). Catalyzes the dephosphorylation of undecaprenyl diphosphate (UPP). Confers resistance to bacitracin. The sequence is that of Undecaprenyl-diphosphatase 1 from Bacillus anthracis.